Reading from the N-terminus, the 504-residue chain is Anaerobic nitric oxide reductase transcription regulator NorR (504 aa).

Asp-57 carries the post-translational modification 4-aspartylphosphate. One can recognise a Sigma-54 factor interaction domain in the interval 187–416; that stretch reads MIGLSPGMTQ…LEHAIHRAVV (230 aa). ATP is bound by residues 215-222 and 278-287; these read GETGTGKE and ADNGTLFLDE. The segment at residues 479–498 is a DNA-binding region (H-T-H motif); sequence WAACARMLETDVANLHRLAK.

The protein operates within nitrogen metabolism; nitric oxide reduction. In terms of biological role, required for the expression of anaerobic nitric oxide (NO) reductase, acts as a transcriptional activator for at least the norVW operon. Activation also requires sigma-54. In Escherichia coli O127:H6 (strain E2348/69 / EPEC), this protein is Anaerobic nitric oxide reductase transcription regulator NorR.